A 911-amino-acid chain; its full sequence is Eukaryotic translation initiation factor 3 subunit C (911 aa).

Disordered stretches follow at residues 1–38 (MSRF…DDEE) and 155–181 (SRFR…GEAA). Positions 11–20 (SESESSEEEV) are enriched in acidic residues. The span at 23 to 32 (PNFNKASAFQ) shows a compositional bias: polar residues. Phosphoserine is present on residues serine 34, serine 165, serine 175, and serine 184. Over residues 162–171 (DQESEAEDEE) the composition is skewed to acidic residues. The span at 196 to 208 (APKIAKSAPAKSV) shows a compositional bias: low complexity. Residues 196–284 (APKIAKSAPA…KRAEDDEDGE (89 aa)) are disordered. The segment covering 210–236 (ADDEDSDDSIDWDSDSESETESSEDEN) has biased composition (acidic residues). A compositionally biased stretch (basic and acidic residues) spans 241-271 (MRERFLKRSTEKGEDKGDDDKRKDKRKEQKL). The 177-residue stretch at 642 to 818 (FHMHINLELL…ETVVMHRSEP (177 aa)) folds into the PCI domain. The interval 851–911 (FQRGNMGNRG…QQQVQTIDEE (61 aa)) is disordered. Positions 885–896 (QRNRNQRGHHKN) are enriched in basic residues. Residues 897–911 (QQQQQQQQVQTIDEE) are compositionally biased toward low complexity.

The protein belongs to the eIF-3 subunit C family. In terms of assembly, component of the eukaryotic translation initiation factor 3 (eIF-3) complex. The eIF-3 complex interacts with pix.

It is found in the cytoplasm. In terms of biological role, component of the eukaryotic translation initiation factor 3 (eIF-3) complex, which is involved in protein synthesis of a specialized repertoire of mRNAs and, together with other initiation factors, stimulates binding of mRNA and methionyl-tRNAi to the 40S ribosome. The eIF-3 complex specifically targets and initiates translation of a subset of mRNAs involved in cell proliferation. The polypeptide is Eukaryotic translation initiation factor 3 subunit C (Drosophila pseudoobscura pseudoobscura (Fruit fly)).